The primary structure comprises 553 residues: MATVTLNYPDLVKLIGIDLSLDKVREVMFELGSETEDIQGDEVTFEVTSDRADLLSEEGIARMLRAYYSIETGFRIPKLQPSGYKLIVNREVEPVRPYVTGAIVRNVQFTDESIKSLMHLQEKLHGTFGRKRKKGAVGVHDLSKIKGREIHYRAVPGDSVKFVPLQSDELMTLSDVLARHPKGIDYRYVLEGKNLMPIITDDEGIFSFPPIINSKRTEVTLNTHDLLIELTGEDLRTIDYMLNIVLYSLDLRGASIYSIDVVYPDETLHRPDFNVRNIDIEVDYVNRVLGLELTAPDIKALLERMGFKVAETGSDYLIVEVPPYRADILHKRDVVDDVGRAFGYNNITPSYPNTPSVGKLTEATKLGDAIRNTMIGLGCQDTFNFILIGKDEVFGKMNLPDDGTAVEISNPYAEQYNIVRTSLIPSLMIVLSNNLHRDYPQNIFEVGTVAHLDSAENTGVKEIDHVACTLCYAKAGFNEIKVKLQSLCANFGKLDELKTVAAEHPSFIPGRCAEVRIGDKKVGIIGELSPVVLKSWGIEMPVAAFEMEIAALK.

The region spanning 273–349 (FNVRNIDIEV…RAFGYNNITP (77 aa)) is the B5 domain. Residues aspartate 327, aspartate 333, aspartate 336, and aspartate 337 each coordinate Mg(2+).

Belongs to the phenylalanyl-tRNA synthetase beta subunit family. Type 2 subfamily. Tetramer of two alpha and two beta subunits. It depends on Mg(2+) as a cofactor.

It localises to the cytoplasm. It carries out the reaction tRNA(Phe) + L-phenylalanine + ATP = L-phenylalanyl-tRNA(Phe) + AMP + diphosphate + H(+). In Methanocella arvoryzae (strain DSM 22066 / NBRC 105507 / MRE50), this protein is Phenylalanine--tRNA ligase beta subunit.